Reading from the N-terminus, the 122-residue chain is Small ribosomal subunit protein bS6 (122 aa).

The tract at residues 96 to 122 is disordered; it reads ETAPSPMMKAVQKEDAAKSHRTEAPAA. A compositionally biased stretch (basic and acidic residues) spans 106-122; that stretch reads VQKEDAAKSHRTEAPAA.

The protein belongs to the bacterial ribosomal protein bS6 family.

In terms of biological role, binds together with bS18 to 16S ribosomal RNA. The chain is Small ribosomal subunit protein bS6 from Herminiimonas arsenicoxydans.